Reading from the N-terminus, the 336-residue chain is Carbamoyl dehydratase HypE (336 aa).

The residue at position 336 (Cys-336) is an S-carbamoylcysteine; by HypF; alternate. Cys-336 is subject to S-cyanocysteine; by autocatalysis; alternate.

The protein belongs to the HypE family. In terms of assembly, homodimer. Forms a complex with HypF. Also forms a complex with HypC, or HybG, and HypD. Modified by HypF, which adds a carboxamido group to the thiolate of the C-terminal cysteine, yielding a protein-S-carboxamide. The carboxamido group is then dehydrated by HypE itself to yield a protein-thiocyanate.

It carries out the reaction C-terminal S-carboxamide-L-cysteinyl-[HypE protein] + ATP = C-terminal S-cyanate-L-cysteinyl-[HypE protein] + ADP + phosphate + H(+). It participates in protein modification; [NiFe] hydrogenase maturation. Involved in the maturation of [NiFe] hydrogenases. Along with HypF, it catalyzes the synthesis of the CN ligands of the active site iron of [NiFe]-hydrogenases. HypE catalyzes the ATP-dependent dehydration of the carboxamido group attached to its C-terminal cysteine to a cyano group. The cyano group is then transferred from HypE to the HypC-HypD complex or the HybG-HypD complex. This is Carbamoyl dehydratase HypE from Escherichia coli (strain K12).